The chain runs to 548 residues: Luciferin 4-monooxygenase (548 aa).

The Microbody targeting signal motif lies at A546 to M548.

This sequence belongs to the ATP-dependent AMP-binding enzyme family. It depends on Mg(2+) as a cofactor.

The protein resides in the peroxisome. It catalyses the reaction firefly D-luciferin + ATP + O2 = firefly oxyluciferin + hnu + AMP + CO2 + diphosphate. In terms of biological role, produces green light with a wavelength of 544 nm. The chain is Luciferin 4-monooxygenase from Nipponoluciola cruciata (Genji firefly).